The following is a 489-amino-acid chain: Glucose-6-phosphate isomerase (489 aa).

The active-site Proton donor is the Glu-309. Catalysis depends on residues His-340 and Lys-459.

This sequence belongs to the GPI family.

Its subcellular location is the cytoplasm. The catalysed reaction is alpha-D-glucose 6-phosphate = beta-D-fructose 6-phosphate. The protein operates within carbohydrate biosynthesis; gluconeogenesis. It participates in carbohydrate degradation; glycolysis; D-glyceraldehyde 3-phosphate and glycerone phosphate from D-glucose: step 2/4. Its function is as follows. Catalyzes the reversible isomerization of glucose-6-phosphate to fructose-6-phosphate. This is Glucose-6-phosphate isomerase from Idiomarina loihiensis (strain ATCC BAA-735 / DSM 15497 / L2-TR).